A 175-amino-acid chain; its full sequence is Sec-independent protein translocase protein TatB (175 aa).

A helical transmembrane segment spans residues 1–21 (MLDLGLSKMALIGVVALVVLG). Disordered regions lie at residues 96 to 115 (VSPG…AASG) and 153 to 175 (VQSG…ARFL). Over residues 160–175 (VARHRPASLRRPARFL) the composition is skewed to basic residues.

This sequence belongs to the TatB family. The Tat system comprises two distinct complexes: a TatABC complex, containing multiple copies of TatA, TatB and TatC subunits, and a separate TatA complex, containing only TatA subunits. Substrates initially bind to the TatABC complex, which probably triggers association of the separate TatA complex to form the active translocon.

Its subcellular location is the cell inner membrane. Part of the twin-arginine translocation (Tat) system that transports large folded proteins containing a characteristic twin-arginine motif in their signal peptide across membranes. Together with TatC, TatB is part of a receptor directly interacting with Tat signal peptides. TatB may form an oligomeric binding site that transiently accommodates folded Tat precursor proteins before their translocation. This is Sec-independent protein translocase protein TatB from Burkholderia mallei (strain ATCC 23344).